A 440-amino-acid polypeptide reads, in one-letter code: Trigger factor (440 aa).

Residues 161–257 (GDYVKLAYEG…VLEVRERVLP (97 aa)) form the PPIase FKBP-type domain.

It belongs to the FKBP-type PPIase family. Tig subfamily.

It localises to the cytoplasm. It catalyses the reaction [protein]-peptidylproline (omega=180) = [protein]-peptidylproline (omega=0). Functionally, involved in protein export. Acts as a chaperone by maintaining the newly synthesized protein in an open conformation. Functions as a peptidyl-prolyl cis-trans isomerase. This chain is Trigger factor, found in Opitutus terrae (strain DSM 11246 / JCM 15787 / PB90-1).